An 897-amino-acid polypeptide reads, in one-letter code: Putative POM121-like protein 1-like (897 aa).

The segment covering 1 to 19 (MPEQDKDPRVQENPDDQRT) has biased composition (basic and acidic residues). Disordered regions lie at residues 1-177 (MPEQ…LPPP), 211-252 (IPDC…PKSQ), 266-302 (EVPS…RDTA), 315-348 (ASRD…GSLL), 362-469 (ATAA…ASRP), 484-522 (DCRP…RPKS), 536-612 (AEVP…LPPS), 642-741 (AQRS…ASRP), 753-793 (AISD…DRPK), and 812-856 (STAP…APFT). The segment covering 54–65 (LHAQSSEIRYNH) has biased composition (polar residues). Over residues 66–76 (TSQTSWTSSST) the composition is skewed to low complexity. 3 stretches are compositionally biased toward polar residues: residues 77–89 (KRNA…SSTG), 103–114 (SRCQLTLSYSKT), and 219–228 (PSHTLSSLAT). Polar residues-rich tracts occupy residues 376 to 385 (NQRSQTSRTR), 417 to 430 (SHCQ…NTVS), 490 to 499 (PSHTLSSLAT), and 556 to 579 (FSSS…TSLI). Over residues 599–612 (TSAPAAAAAALPPS) the composition is skewed to low complexity. 4 stretches are compositionally biased toward polar residues: residues 650–676 (NQRS…STEG), 689–702 (SHCQ…NTVS), 762–771 (PSHTLSSLAT), and 828–849 (FSSS…QDTS). A helical membrane pass occupies residues 877 to 897 (LGLFLLVFSFFFLLTWASFSF).

The protein belongs to the POM121 family.

The protein localises to the membrane. This Homo sapiens (Human) protein is Putative POM121-like protein 1-like.